Reading from the N-terminus, the 879-residue chain is Phosphoenolpyruvate carboxylase (879 aa).

Catalysis depends on residues histidine 138 and lysine 545.

The protein belongs to the PEPCase type 1 family. Requires Mg(2+) as cofactor.

It carries out the reaction oxaloacetate + phosphate = phosphoenolpyruvate + hydrogencarbonate. Functionally, forms oxaloacetate, a four-carbon dicarboxylic acid source for the tricarboxylic acid cycle. The protein is Phosphoenolpyruvate carboxylase of Actinobacillus pleuropneumoniae serotype 5b (strain L20).